Consider the following 144-residue polypeptide: 3-dehydroquinate dehydratase (144 aa).

Residue Tyr-22 is the Proton acceptor of the active site. Residues Asn-73, His-79, and Asp-86 each coordinate substrate. The Proton donor role is filled by His-99. Residues 100-101 (LS) and Arg-110 contribute to the substrate site.

This sequence belongs to the type-II 3-dehydroquinase family. In terms of assembly, homododecamer.

It catalyses the reaction 3-dehydroquinate = 3-dehydroshikimate + H2O. It functions in the pathway metabolic intermediate biosynthesis; chorismate biosynthesis; chorismate from D-erythrose 4-phosphate and phosphoenolpyruvate: step 3/7. Catalyzes a trans-dehydration via an enolate intermediate. In Pelotomaculum thermopropionicum (strain DSM 13744 / JCM 10971 / SI), this protein is 3-dehydroquinate dehydratase.